The sequence spans 583 residues: ATP-dependent lipid A-core flippase (583 aa).

Helical transmembrane passes span 27 to 47, 69 to 89, 142 to 162, 165 to 185, and 249 to 269; these read LAVA…MVSL, LLVF…TYCL, ALVS…LMFY, WQLS…IGFV, and AAAN…VLYL. The ABC transmembrane type-1 domain maps to 28–310; sequence AVAVVALIIN…LTNVTSQFQR (283 aa). One can recognise an ABC transporter domain in the interval 342-578; sequence VNVKDISFTY…DGAYAQLHRI (237 aa). Residue 376–383 participates in ATP binding; it reads GRSGSGKS.

This sequence belongs to the ABC transporter superfamily. Lipid exporter (TC 3.A.1.106) family. Homodimer.

Its subcellular location is the cell inner membrane. The catalysed reaction is ATP + H2O + lipid A-core oligosaccharideSide 1 = ADP + phosphate + lipid A-core oligosaccharideSide 2.. In terms of biological role, involved in lipopolysaccharide (LPS) biosynthesis. Translocates lipid A-core from the inner to the outer leaflet of the inner membrane. Transmembrane domains (TMD) form a pore in the inner membrane and the ATP-binding domain (NBD) is responsible for energy generation. This chain is ATP-dependent lipid A-core flippase, found in Vibrio vulnificus (strain YJ016).